The chain runs to 432 residues: Glutamyl-tRNA reductase (432 aa).

Substrate-binding positions include 49–52 (TCNR), Ser-109, 114–116 (EGQ), and Gln-120. Catalysis depends on Cys-50, which acts as the Nucleophile. Position 189 to 194 (189 to 194 (GAGKMS)) interacts with NADP(+).

This sequence belongs to the glutamyl-tRNA reductase family. Homodimer.

Its subcellular location is the plastid. The protein resides in the cyanelle. It catalyses the reaction (S)-4-amino-5-oxopentanoate + tRNA(Glu) + NADP(+) = L-glutamyl-tRNA(Glu) + NADPH + H(+). Its pathway is porphyrin-containing compound metabolism; protoporphyrin-IX biosynthesis; 5-aminolevulinate from L-glutamyl-tRNA(Glu): step 1/2. It functions in the pathway porphyrin-containing compound metabolism; chlorophyll biosynthesis. In terms of biological role, catalyzes the NADPH-dependent reduction of glutamyl-tRNA(Glu) to glutamate 1-semialdehyde (GSA). This Cyanophora paradoxa protein is Glutamyl-tRNA reductase.